A 281-amino-acid chain; its full sequence is NADPH-dependent 7-cyano-7-deazaguanine reductase (281 aa).

88–90 contributes to the substrate binding site; it reads VES. 90 to 91 is an NADPH binding site; the sequence is SK. Cys189 (thioimide intermediate) is an active-site residue. The active-site Proton donor is the Asp196. 228–229 is a substrate binding site; the sequence is HE. 257–258 serves as a coordination point for NADPH; that stretch reads RG.

The protein belongs to the GTP cyclohydrolase I family. QueF type 2 subfamily. Homodimer.

Its subcellular location is the cytoplasm. It catalyses the reaction 7-aminomethyl-7-carbaguanine + 2 NADP(+) = 7-cyano-7-deazaguanine + 2 NADPH + 3 H(+). It participates in tRNA modification; tRNA-queuosine biosynthesis. Catalyzes the NADPH-dependent reduction of 7-cyano-7-deazaguanine (preQ0) to 7-aminomethyl-7-deazaguanine (preQ1). The polypeptide is NADPH-dependent 7-cyano-7-deazaguanine reductase (Klebsiella pneumoniae subsp. pneumoniae (strain ATCC 700721 / MGH 78578)).